The primary structure comprises 467 residues: Coiled-coil domain-containing protein 174 (467 aa).

2 disordered regions span residues 40–77 and 124–162; these read VFGK…EEQK and EMEA…SEEW. Residues 63-99 are a coiled coil; it reads NRAEKDAEQKIEEQKTLDKAREKLEEKAKLYEKMTKG. Composition is skewed to basic and acidic residues over residues 64–77 and 124–139; these read RAEK…EEQK and EMEA…KAGE. Phosphoserine is present on Ser197. A coiled-coil region spans residues 267 to 309; sequence LEMLREQTTDQRTKRENIKEKRKAILEARLAKLRQKKMKKSKE. Disordered stretches follow at residues 299–363 and 378–453; these read LRQK…HIRE and RQSD…TVTF. Pro residues predominate over residues 324–336; that stretch reads PLPPEPEAVPTPR. 2 stretches are compositionally biased toward basic and acidic residues: residues 348 to 363 and 378 to 389; these read VQER…HIRE and RQSDLRAERDPE. The segment covering 425 to 437 has biased composition (polar residues); it reads PDQSHGPSPEHTS. Over residues 439–448 the composition is skewed to pro residues; the sequence is TPAPDNPPQA.

In terms of tissue distribution, widely expressed.

The protein localises to the nucleus. Probably involved in neuronal development. The protein is Coiled-coil domain-containing protein 174 (CCDC174) of Homo sapiens (Human).